The following is a 261-amino-acid chain: Hemin import ATP-binding protein HmuV (261 aa).

Residues 8-243 (IRVTDLSYSV…ESIRTAYGHE (236 aa)) form the ABC transporter domain. ATP is bound at residue 40–47 (GRNGAGKS).

Belongs to the ABC transporter superfamily. Heme (hemin) importer (TC 3.A.1.14.5) family. The complex is composed of two ATP-binding proteins (HmuV), two transmembrane proteins (HmuU) and a solute-binding protein (HmuT).

It localises to the cell membrane. Functionally, part of the ABC transporter complex HmuTUV involved in hemin import. Responsible for energy coupling to the transport system. The polypeptide is Hemin import ATP-binding protein HmuV (Deinococcus radiodurans (strain ATCC 13939 / DSM 20539 / JCM 16871 / CCUG 27074 / LMG 4051 / NBRC 15346 / NCIMB 9279 / VKM B-1422 / R1)).